The following is a 376-amino-acid chain: uncharacterized protein (376 aa).

It belongs to the YCR102c/YLR460c/YNL134c family.

This is an uncharacterized protein from Saccharomyces cerevisiae (strain ATCC 204508 / S288c) (Baker's yeast).